Here is a 238-residue protein sequence, read N- to C-terminus: Protein TIFY 3A (238 aa).

The 36-residue stretch at 39-74 (EPDASTQLTIIFGGSCRVFNGVPAQKVQEIIRIAFA) folds into the Tify 1 domain. Positions 101–120 (PIARRRSLQRFLEKRRDRST) match the Jas 1 motif. Positions 103–110 (ARRRSLQR) match the Nuclear localization signal 1 motif. The 36-residue stretch at 125-160 (SMILPSQLTIIFGGSFSVFDGIPAEKVQEILHIAAA) folds into the Tify 2 domain. The Jas 2 signature appears at 197–222 (PIARRRSLQRFFEKRRHRFVHTKPYS). The short motif at 199-206 (ARRRSLQR) is the Nuclear localization signal 2 element. The segment at 219-238 (KPYSATTSEADKNETSPIVT) is disordered.

Belongs to the TIFY/JAZ family. As to quaternary structure, interacts with MYC2, MYB21, MYB24, AFPH2/NINJA, TIFY10A/JAZ1, TIFY10B/JAZ2, TIFY6B/JAZ3, TIFY6A/JAZ4, TIFY7/JAZ9 and TIFY9/JAZ10. Ubiquitinated. Targeted for degradation by the SCF(COI1) E3 ubiquitin ligase-proteasome pathway during jasmonate signaling.

The protein resides in the nucleus. Its function is as follows. Repressor of jasmonate (JA) responses. Targets MYC2, MYC3 and MYC4 that are JA-dependent transcription activators. This Arabidopsis thaliana (Mouse-ear cress) protein is Protein TIFY 3A (TIFY3A).